Here is a 333-residue protein sequence, read N- to C-terminus: UbiA prenyltransferase domain-containing protein 1 (333 aa).

The disordered stretch occupies residues 13-33; the sequence is NAESPRGGERNDCGAGAERGP. The next 8 membrane-spanning stretches (helical) occupy residues 78 to 98, 129 to 149, 155 to 175, 177 to 197, 199 to 219, 240 to 260, 265 to 285, and 310 to 330; these read LLVGSAVAVLAVHGAGNLVNT, FGVFLYTVGCICAAGLYAVST, LALVYFGGLSSSFLYTGGIGF, YVALGDVVILITFGPLAVMFA, AVQVGYLSVSPLLYAVPLALS, IVTLAIIIGPAFSYVLYTVLL, LIFCVLATRYTISMALPLLTI, and LNLLLGLFYVFGIMLAPAGAL.

It belongs to the UbiA prenyltransferase family.

It is found in the endoplasmic reticulum membrane. The protein resides in the golgi apparatus membrane. It localises to the mitochondrion membrane. The enzyme catalyses menadiol + (2E,6E,10E)-geranylgeranyl diphosphate = menaquinol-4 + diphosphate. It catalyses the reaction all-trans-decaprenyl diphosphate + 4-hydroxybenzoate = 4-hydroxy-3-(all-trans-decaprenyl)benzoate + diphosphate. The protein operates within quinol/quinone metabolism; menaquinone biosynthesis. Its pathway is cofactor biosynthesis; ubiquinone biosynthesis. Prenyltransferase that mediates the formation of menaquinone-4 (MK-4) and coenzyme Q10. MK-4 is a vitamin K2 isoform required for endothelial cell development. Mediates the conversion of phylloquinone (PK) into MK-4, probably by cleaving the side chain of phylloquinone (PK) to release 2-methyl-1,4-naphthoquinone (menadione; K3) and then prenylating it with geranylgeranyl pyrophosphate (GGPP) to form MK-4. Also plays a role in cardiovascular development independently of MK-4 biosynthesis, by acting as a coenzyme Q10 biosynthetic enzyme: coenzyme Q10, also named ubiquinone, plays an important antioxidant role in the cardiovascular system. Mediates biosynthesis of coenzyme Q10 in the Golgi membrane, leading to protect cardiovascular tissues from NOS3/eNOS-dependent oxidative stress. The polypeptide is UbiA prenyltransferase domain-containing protein 1 (UBIAD1) (Gallus gallus (Chicken)).